Reading from the N-terminus, the 390-residue chain is Precorrin-6Y C(5,15)-methyltransferase [decarboxylating] (390 aa).

This sequence belongs to the precorrin methyltransferase family.

The enzyme catalyses precorrin-6B + 2 S-adenosyl-L-methionine = precorrin-8X + 2 S-adenosyl-L-homocysteine + CO2 + 3 H(+). Its pathway is cofactor biosynthesis; adenosylcobalamin biosynthesis; cob(II)yrinate a,c-diamide from precorrin-2 (aerobic route): step 7/10. In terms of biological role, catalyzes the methylation of both C-5 and C-15 in precorrin-6Y to form precorrin-8X. This is Precorrin-6Y C(5,15)-methyltransferase [decarboxylating] (cobL) from Mycobacterium tuberculosis (strain ATCC 25618 / H37Rv).